Reading from the N-terminus, the 223-residue chain is uncharacterized protein (223 aa).

It to M.jannaschii MJ0575.

This is an uncharacterized protein from Methanocaldococcus jannaschii (strain ATCC 43067 / DSM 2661 / JAL-1 / JCM 10045 / NBRC 100440) (Methanococcus jannaschii).